We begin with the raw amino-acid sequence, 200 residues long: Dephospho-CoA kinase (200 aa).

Residues 4–200 (VIGLTGGIAS…AILKKWNIID (197 aa)) form the DPCK domain. 12-17 (ASGKST) contacts ATP.

Belongs to the CoaE family.

The protein localises to the cytoplasm. It catalyses the reaction 3'-dephospho-CoA + ATP = ADP + CoA + H(+). Its pathway is cofactor biosynthesis; coenzyme A biosynthesis; CoA from (R)-pantothenate: step 5/5. Functionally, catalyzes the phosphorylation of the 3'-hydroxyl group of dephosphocoenzyme A to form coenzyme A. This is Dephospho-CoA kinase from Bacillus cereus (strain ZK / E33L).